We begin with the raw amino-acid sequence, 305 residues long: Phosphatidate cytidylyltransferase (305 aa).

8 helical membrane-spanning segments follow: residues Phe27–Leu47, Phe67–Cys87, Phe96–Val116, Leu124–Ile144, Ile150–Leu170, Thr202–Ser222, Ile232–Gly252, and Met277–Ile297.

It belongs to the CDS family.

The protein localises to the cell membrane. It catalyses the reaction a 1,2-diacyl-sn-glycero-3-phosphate + CTP + H(+) = a CDP-1,2-diacyl-sn-glycerol + diphosphate. It participates in phospholipid metabolism; CDP-diacylglycerol biosynthesis; CDP-diacylglycerol from sn-glycerol 3-phosphate: step 3/3. This chain is Phosphatidate cytidylyltransferase (cdsA), found in Chlamydia trachomatis serovar D (strain ATCC VR-885 / DSM 19411 / UW-3/Cx).